The primary structure comprises 139 residues: ATP synthase epsilon chain (139 aa).

Belongs to the ATPase epsilon chain family. F-type ATPases have 2 components, CF(1) - the catalytic core - and CF(0) - the membrane proton channel. CF(1) has five subunits: alpha(3), beta(3), gamma(1), delta(1), epsilon(1). CF(0) has three main subunits: a, b and c.

The protein localises to the cell membrane. Its function is as follows. Produces ATP from ADP in the presence of a proton gradient across the membrane. The polypeptide is ATP synthase epsilon chain (Roseiflexus sp. (strain RS-1)).